Consider the following 393-residue polypeptide: uncharacterized protein (393 aa).

Disordered stretches follow at residues 77 to 118 and 259 to 296; these read DSNN…SIRP and INNN…DESN. Positions 79–92 are enriched in low complexity; it reads NNNNNNNNNNNNNN. The span at 103 to 114 shows a compositional bias: polar residues; it reads IRQSLSSPQQLV. The span at 259 to 289 shows a compositional bias: low complexity; that stretch reads INNNNNNNNNNSNNNNNNNNSNNNDNNNNIN.

This is an uncharacterized protein from Dictyostelium discoideum (Social amoeba).